The chain runs to 351 residues: Anthranilate phosphoribosyltransferase (351 aa).

5-phospho-alpha-D-ribose 1-diphosphate-binding positions include glycine 84, 87-88 (GD), 95-98 (NISS), 113-121 (KHGNRGASS), and alanine 125. Position 84 (glycine 84) interacts with anthranilate. Serine 97 serves as a coordination point for Mg(2+). Residue asparagine 116 participates in anthranilate binding. Arginine 171 is a binding site for anthranilate. Residues aspartate 229 and lysine 230 each coordinate Mg(2+).

The protein belongs to the anthranilate phosphoribosyltransferase family. As to quaternary structure, homodimer. Mg(2+) is required as a cofactor.

The catalysed reaction is N-(5-phospho-beta-D-ribosyl)anthranilate + diphosphate = 5-phospho-alpha-D-ribose 1-diphosphate + anthranilate. The protein operates within amino-acid biosynthesis; L-tryptophan biosynthesis; L-tryptophan from chorismate: step 2/5. Functionally, catalyzes the transfer of the phosphoribosyl group of 5-phosphorylribose-1-pyrophosphate (PRPP) to anthranilate to yield N-(5'-phosphoribosyl)-anthranilate (PRA). The protein is Anthranilate phosphoribosyltransferase of Clavibacter sepedonicus (Clavibacter michiganensis subsp. sepedonicus).